A 127-amino-acid chain; its full sequence is Phosphoribosyl-AMP cyclohydrolase (127 aa).

Asp78 is a Mg(2+) binding site. Cys79 contributes to the Zn(2+) binding site. The Mg(2+) site is built by Asp80 and Asp82. Positions 95 and 102 each coordinate Zn(2+).

This sequence belongs to the PRA-CH family. As to quaternary structure, homodimer. The cofactor is Mg(2+). Zn(2+) serves as cofactor.

It localises to the cytoplasm. It catalyses the reaction 1-(5-phospho-beta-D-ribosyl)-5'-AMP + H2O = 1-(5-phospho-beta-D-ribosyl)-5-[(5-phospho-beta-D-ribosylamino)methylideneamino]imidazole-4-carboxamide. Its pathway is amino-acid biosynthesis; L-histidine biosynthesis; L-histidine from 5-phospho-alpha-D-ribose 1-diphosphate: step 3/9. Its function is as follows. Catalyzes the hydrolysis of the adenine ring of phosphoribosyl-AMP. The sequence is that of Phosphoribosyl-AMP cyclohydrolase from Salinibacter ruber (strain DSM 13855 / M31).